A 764-amino-acid chain; its full sequence is Polyadenylate-binding protein, cytoplasmic and nuclear (764 aa).

The disordered stretch occupies residues 36–56; it reads VPEAQAEGAEAAPTPTAAPHP. 4 consecutive RRM domains span residues 60-138, 148-225, 241-318, and 344-462; these read ASLY…WSQR, GNIF…HHIP, TNVY…RAQK, and VNLY…LAQR. Disordered stretches follow at residues 375–420 and 587–634; these read VMRD…GDRK and GRGG…PRGN. Basic and acidic residues-rich tracts occupy residues 387–399 and 408–420; these read KDEK…KEGE and GSEK…GDRK. Residues 587-596 are compositionally biased toward gly residues; sequence GRGGPAGRGP. A compositionally biased stretch (low complexity) spans 597–613; that stretch reads QGIPAGIPQGLQGGPAV. Residues 657-734 enclose the PABC domain; that stretch reads GSFLQAQLAT…ALAVYDEYLK (78 aa). Polar residues predominate over residues 735–745; sequence TQGQQPTQQPA. Residues 735 to 764 are disordered; that stretch reads TQGQQPTQQPAEANGEQPKAEEQKPEEQKA. Over residues 752 to 764 the composition is skewed to basic and acidic residues; that stretch reads PKAEEQKPEEQKA.

Belongs to the polyadenylate-binding protein type-1 family.

It is found in the cytoplasm. Its subcellular location is the nucleus. In terms of biological role, binds the poly(A) tail of mRNA. Appears to be an important mediator of the multiple roles of the poly(A) tail in mRNA biogenesis, stability and translation. In the nucleus, involved in both mRNA cleavage and polyadenylation. Is also required for efficient mRNA export to the cytoplasm. Acts in concert with a poly(A)-specific nuclease (PAN) to affect poly(A) tail shortening, which may occur concomitantly with either nucleocytoplasmic mRNA transport or translational initiation. In the cytoplasm, stimulates translation initiation and regulates mRNA decay through translation termination-coupled poly(A) shortening, probably mediated by PAN. The sequence is that of Polyadenylate-binding protein, cytoplasmic and nuclear (pabp-1) from Neurospora crassa (strain ATCC 24698 / 74-OR23-1A / CBS 708.71 / DSM 1257 / FGSC 987).